Consider the following 163-residue polypeptide: Photosystem II extrinsic protein V (163 aa).

The signal sequence occupies residues 1-26 (MLKKCVWLAVALCLCLWQFTMGTALA). Residues histidine 67 and histidine 118 each coordinate heme c.

This sequence belongs to the cytochrome c family. PsbV subfamily. In terms of assembly, PSII is composed of 1 copy each of membrane proteins PsbA, PsbB, PsbC, PsbD, PsbE, PsbF, PsbH, PsbI, PsbJ, PsbK, PsbL, PsbM, PsbT, PsbX, PsbY, PsbZ, Psb30/Ycf12, peripheral proteins PsbO, CyanoQ (PsbQ), PsbU, PsbV and a large number of cofactors. It forms dimeric complexes. Requires heme c as cofactor.

It localises to the cellular thylakoid membrane. One of the extrinsic, lumenal subunits of photosystem II (PSII). PSII is a light-driven water plastoquinone oxidoreductase, using light energy to abstract electrons from H(2)O, generating a proton gradient subsequently used for ATP formation. The extrinsic proteins stabilize the structure of photosystem II oxygen-evolving complex (OEC), the ion environment of oxygen evolution and protect the OEC against heat-induced inactivation. Low-potential cytochrome c that plays a role in the OEC of PSII. In Thermosynechococcus vestitus (strain NIES-2133 / IAM M-273 / BP-1), this protein is Photosystem II extrinsic protein V.